A 123-amino-acid chain; its full sequence is Signal recognition particle 14 kDa protein (123 aa).

Residues 99–123 form a disordered region; the sequence is KKKPTPTTTPSSSTTAKTAAKKTKV. Low complexity predominate over residues 103 to 116; sequence TPTTTPSSSTTAKT.

This sequence belongs to the SRP14 family. As to quaternary structure, heterodimer with srp9; binds RNA as heterodimer. Component of a signal recognition particle (SRP) complex that consists of a 7SL RNA molecule and six protein subunits: srp72, srp68, srp54, srp19, srp14 and srp9.

The protein localises to the cytoplasm. Functionally, component of the signal recognition particle (SRP) complex, a ribonucleoprotein complex that mediates the cotranslational targeting of secretory and membrane proteins to the endoplasmic reticulum (ER). Srp9 together with srp14 and the Alu portion of the SRP RNA, constitutes the elongation arrest domain of SRP. The complex of srp9 and srp14 is required for SRP RNA binding. The protein is Signal recognition particle 14 kDa protein (srp14-1) of Dictyostelium discoideum (Social amoeba).